Consider the following 509-residue polypeptide: ATP synthase subunit alpha (509 aa).

Position 169-176 (169-176) interacts with ATP; sequence GDRQTGKT.

This sequence belongs to the ATPase alpha/beta chains family. F-type ATPases have 2 components, CF(1) - the catalytic core - and CF(0) - the membrane proton channel. CF(1) has five subunits: alpha(3), beta(3), gamma(1), delta(1), epsilon(1). CF(0) has three main subunits: a(1), b(2) and c(9-12). The alpha and beta chains form an alternating ring which encloses part of the gamma chain. CF(1) is attached to CF(0) by a central stalk formed by the gamma and epsilon chains, while a peripheral stalk is formed by the delta and b chains.

The protein resides in the cell inner membrane. It carries out the reaction ATP + H2O + 4 H(+)(in) = ADP + phosphate + 5 H(+)(out). Its function is as follows. Produces ATP from ADP in the presence of a proton gradient across the membrane. The alpha chain is a regulatory subunit. The chain is ATP synthase subunit alpha from Rhizobium etli (strain ATCC 51251 / DSM 11541 / JCM 21823 / NBRC 15573 / CFN 42).